A 308-amino-acid chain; its full sequence is tRNA dimethylallyltransferase (308 aa).

ATP is bound at residue 19 to 26 (GPTASGKS). Residue 21 to 26 (TASGKS) participates in substrate binding. The interaction with substrate tRNA stretch occupies residues 44 to 47 (DSMQ).

This sequence belongs to the IPP transferase family. Monomer. It depends on Mg(2+) as a cofactor.

The enzyme catalyses adenosine(37) in tRNA + dimethylallyl diphosphate = N(6)-dimethylallyladenosine(37) in tRNA + diphosphate. In terms of biological role, catalyzes the transfer of a dimethylallyl group onto the adenine at position 37 in tRNAs that read codons beginning with uridine, leading to the formation of N6-(dimethylallyl)adenosine (i(6)A). The chain is tRNA dimethylallyltransferase from Methylobacterium radiotolerans (strain ATCC 27329 / DSM 1819 / JCM 2831 / NBRC 15690 / NCIMB 10815 / 0-1).